The following is a 371-amino-acid chain: METIIESRQRINSPGVLPPPLSPLIVDVTPKERASISNVANILLKAFGHYEHPDFISALHLNAFQLLPERIAGILSRFGTDFSRHQYGALVFRGLTEVDQEALGPTPPSWKETDYSKLVKYGFICSLLHGAIPSKPVQYYAQRKGGGLLHAVIPDEKMSHTQTGSGSRTDLFVHTEDAFLFNQADFLSFLFLRNEEQVPSTLYSIRSHGDTNAIMAELFKPIYKCPKDANYADDENAGEEVTTSILYGNRERPFIRFDAAEQIYNEKAGQTPEAMHNLVRFWDEAKQLIYNDFVPDSGDLIFVNNHLCAHGRNSFVAGYRNENGQLVKCERRLMLRMMSKTSLINIQSVTQLNDPYFIMEEHYGKLFHSQQ.

3 residues coordinate Fe cation: His174, Glu176, and His310.

It belongs to the clavaminate synthase family. Requires Fe(2+) as cofactor.

It carries out the reaction L-lysine + 2-oxoglutarate + O2 = (4R)-4-hydroxy-L-lysine + succinate + CO2. Its function is as follows. Alpha-ketoglutarate-dependent dioxygenase that in vitro catalyzes the regio- and stereoselective hydroxylation of L-lysine, leading to (4R)-4-hydroxy-L-lysine. This Niastella koreensis (strain DSM 17620 / KACC 11465 / NBRC 106392 / GR20-10) protein is L-lysine 4-hydroxylase.